We begin with the raw amino-acid sequence, 233 residues long: Phosphoribosylformylglycinamidine synthase subunit PurQ (233 aa).

Residues 3–233 form the Glutamine amidotransferase type-1 domain; it reads SAVLVFPGIN…GLVAHLERAA (231 aa). Cys-87 functions as the Nucleophile in the catalytic mechanism. Residues His-204 and Glu-206 contribute to the active site.

As to quaternary structure, part of the FGAM synthase complex composed of 1 PurL, 1 PurQ and 2 PurS subunits.

The protein resides in the cytoplasm. The catalysed reaction is N(2)-formyl-N(1)-(5-phospho-beta-D-ribosyl)glycinamide + L-glutamine + ATP + H2O = 2-formamido-N(1)-(5-O-phospho-beta-D-ribosyl)acetamidine + L-glutamate + ADP + phosphate + H(+). It catalyses the reaction L-glutamine + H2O = L-glutamate + NH4(+). It functions in the pathway purine metabolism; IMP biosynthesis via de novo pathway; 5-amino-1-(5-phospho-D-ribosyl)imidazole from N(2)-formyl-N(1)-(5-phospho-D-ribosyl)glycinamide: step 1/2. Part of the phosphoribosylformylglycinamidine synthase complex involved in the purines biosynthetic pathway. Catalyzes the ATP-dependent conversion of formylglycinamide ribonucleotide (FGAR) and glutamine to yield formylglycinamidine ribonucleotide (FGAM) and glutamate. The FGAM synthase complex is composed of three subunits. PurQ produces an ammonia molecule by converting glutamine to glutamate. PurL transfers the ammonia molecule to FGAR to form FGAM in an ATP-dependent manner. PurS interacts with PurQ and PurL and is thought to assist in the transfer of the ammonia molecule from PurQ to PurL. The chain is Phosphoribosylformylglycinamidine synthase subunit PurQ from Nitrobacter winogradskyi (strain ATCC 25391 / DSM 10237 / CIP 104748 / NCIMB 11846 / Nb-255).